A 117-amino-acid polypeptide reads, in one-letter code: Galanin peptides (117 aa).

An N-terminal signal peptide occupies residues methionine 1–serine 19. A propeptide spanning residues glutamate 20–glutamate 30 is cleaved from the precursor. Threonine 61 carries the post-translational modification Threonine amide.

This sequence belongs to the galanin family.

It localises to the secreted. Its function is as follows. Endocrine hormone of the central and peripheral nervous systems that binds and activates the G protein-coupled receptors GALR1, GALR2, and GALR3. This small neuropeptide may regulate diverse physiologic functions including contraction of smooth muscle of the gastrointestinal and genitourinary tract, growth hormone and insulin release and adrenal secretion. In Coturnix japonica (Japanese quail), this protein is Galanin peptides (GAL).